Here is a 1151-residue protein sequence, read N- to C-terminus: Chromosome partition protein Smc (1151 aa).

Position 32 to 39 (32 to 39) interacts with ATP; sequence PNGCGKSN. Coiled coils occupy residues 170-218, 342-379, 407-508, and 633-994; these read ISGL…AARY, IGRL…ALGE, DSRT…REAQ, and LKQL…EGRE. Composition is skewed to basic and acidic residues over residues 421-438 and 465-480; these read RARE…RAAE and DEAR…EARA. Disordered stretches follow at residues 421 to 483, 806 to 826, and 862 to 889; these read RARE…AQRS, SAEL…AAEA, and LRAA…AEAR. Over residues 866–889 the composition is skewed to basic and acidic residues; it reads QEAEREAERQAGESREARARAEAR.

It belongs to the SMC family. In terms of assembly, homodimer.

Its subcellular location is the cytoplasm. Functionally, required for chromosome condensation and partitioning. The protein is Chromosome partition protein Smc of Cereibacter sphaeroides (strain ATCC 17029 / ATH 2.4.9) (Rhodobacter sphaeroides).